A 221-amino-acid chain; its full sequence is Pyridoxal phosphate homeostasis protein (221 aa).

Residue Lys26 is modified to N6-(pyridoxal phosphate)lysine.

The protein belongs to the pyridoxal phosphate-binding protein YggS/PROSC family.

Functionally, pyridoxal 5'-phosphate (PLP)-binding protein, which is involved in PLP homeostasis. This chain is Pyridoxal phosphate homeostasis protein, found in Corynebacterium glutamicum (strain ATCC 13032 / DSM 20300 / JCM 1318 / BCRC 11384 / CCUG 27702 / LMG 3730 / NBRC 12168 / NCIMB 10025 / NRRL B-2784 / 534).